Consider the following 470-residue polypeptide: MLNMTEEHDKALEAPCSPAGTTSSMSHVDSDSDSPLSPAGSEGLGCAPAPAPRPPGAAPLGAKVDAAEVDERFPACIRDAVSQVLKGYDWSLVPMPVRGNGSLKAKPHVKRPMNAFMVWAQAARRKLADQYPHLHNAELSKTLGKLWRLLSENEKRPFVEEAERLRVQHKKDHPDYKYQPRRRKSVKAGQSDSDSGAELSHHAGTQIYKADSGLGGMADGHHHGEHAGQPHGPPTPPTTPKTDLHHGSKQELKHEGRRLVESGRQNIDFSNVDISELSSEVINNMETFDVHEFDQYLPLNGHTAMPADHGPGAGFYSTSYSHSAAGAGGAGQVWTHKSPASASPSSADSGQQRPHIKTEQLSPSHYSDQSHGSPAHSDYGSYSTQACATTASTATAAASFSSSQCDYTDLQSSNYYNPYPGYPSSIYQYPYFHSSRRPYATPILNGLSIPPAHSPTANWDQPVYTTLTRP.

Positions 1-12 are enriched in basic and acidic residues; sequence MLNMTEEHDKAL. Residues 1 to 60 are disordered; the sequence is MLNMTEEHDKALEAPCSPAGTTSSMSHVDSDSDSPLSPAGSEGLGCAPAPAPRPPGAAPL. The tract at residues 67-107 is dimerization (DIM); the sequence is AEVDERFPACIRDAVSQVLKGYDWSLVPMPVRGNGSLKAKP. The segment at residues 109–177 is a DNA-binding region (HMG box); it reads VKRPMNAFMV…QHKKDHPDYK (69 aa). Basic and acidic residues-rich tracts occupy residues 163–178, 219–228, and 242–257; these read ERLR…DYKY, DGHHHGEHAG, and TDLH…HEGR. Disordered stretches follow at residues 163 to 257 and 327 to 381; these read ERLR…HEGR and AGGA…DYGS. The interval 233 to 308 is transactivation domain (TAM); the sequence is PPTPPTTPKT…LNGHTAMPAD (76 aa). Low complexity predominate over residues 338-349; the sequence is SPASASPSSADS. Positions 353–470 are transactivation domain (TAC); it reads RPHIKTEQLS…QPVYTTLTRP (118 aa). The span at 359 to 372 shows a compositional bias: polar residues; the sequence is EQLSPSHYSDQSHG. A 9aaTAD motif is present at residues 424–432; it reads SSIYQYPYF.

In terms of tissue distribution, widely expressed in the embryo.

The protein localises to the nucleus. Transcription factor that may play a role in central nervous system, limb and facial development. May be involved in male sex determination. Binds the consensus motif 5'-[AT][AT]CAA[AT]G-3'. This Gallus gallus (Chicken) protein is Transcription factor SOX-8 (SOX8).